A 335-amino-acid polypeptide reads, in one-letter code: DNA-directed RNA polymerase subunit alpha (335 aa).

Residues 1–233 (MQRNWRELIK…DQLTIFINFE (233 aa)) form an alpha N-terminal domain (alpha-NTD) region. Positions 249–335 (FNDHLFRSVD…DIENRRKEQE (87 aa)) are alpha C-terminal domain (alpha-CTD).

The protein belongs to the RNA polymerase alpha chain family. In terms of assembly, homodimer. The RNAP catalytic core consists of 2 alpha, 1 beta, 1 beta' and 1 omega subunit. When a sigma factor is associated with the core the holoenzyme is formed, which can initiate transcription.

The catalysed reaction is RNA(n) + a ribonucleoside 5'-triphosphate = RNA(n+1) + diphosphate. Functionally, DNA-dependent RNA polymerase catalyzes the transcription of DNA into RNA using the four ribonucleoside triphosphates as substrates. The sequence is that of DNA-directed RNA polymerase subunit alpha from Syntrophobacter fumaroxidans (strain DSM 10017 / MPOB).